A 249-amino-acid polypeptide reads, in one-letter code: Aquaporin TIP4-3 (249 aa).

A run of 2 helical transmembrane segments spans residues 20 to 40 and 56 to 76; these read GVLGELVLTFLFVFIGVGAAM and TAVALGQALVVAVIATAGFHI. Residues 82-84 carry the NPA 1 motif; sequence NPA. Transmembrane regions (helical) follow at residues 100–122, 141–161, and 169–189; these read SSLYIAAQMLASSAACFLLRWLT, GVVAEAVFTFSLLFVIYATIL, and GAGPLLTGLLVGANSVAGAAL. The NPA 2 signature appears at 195 to 197; that stretch reads NPA. A helical membrane pass occupies residues 214-234; sequence VYWVGPLAGGPLAVLVYECCF.

This sequence belongs to the MIP/aquaporin (TC 1.A.8) family. TIP (TC 1.A.8.10) subfamily.

It localises to the vacuole membrane. Aquaporins facilitate the transport of water and small neutral solutes across cell membranes. This Zea mays (Maize) protein is Aquaporin TIP4-3 (TIP4-3).